The sequence spans 170 residues: NADH-quinone oxidoreductase subunit B (170 aa).

Positions 37, 38, 102, and 131 each coordinate [4Fe-4S] cluster.

It belongs to the complex I 20 kDa subunit family. NDH-1 is composed of 14 different subunits. Subunits NuoB, C, D, E, F, and G constitute the peripheral sector of the complex. The cofactor is [4Fe-4S] cluster.

It localises to the cell inner membrane. The enzyme catalyses a quinone + NADH + 5 H(+)(in) = a quinol + NAD(+) + 4 H(+)(out). Its function is as follows. NDH-1 shuttles electrons from NADH, via FMN and iron-sulfur (Fe-S) centers, to quinones in the respiratory chain. The immediate electron acceptor for the enzyme in this species is believed to be ubiquinone. Couples the redox reaction to proton translocation (for every two electrons transferred, four hydrogen ions are translocated across the cytoplasmic membrane), and thus conserves the redox energy in a proton gradient. The polypeptide is NADH-quinone oxidoreductase subunit B (Geobacter metallireducens (strain ATCC 53774 / DSM 7210 / GS-15)).